We begin with the raw amino-acid sequence, 827 residues long: Periplasmic nitrate reductase (827 aa).

Residues 1-34 constitute a signal peptide (tat-type signal); the sequence is MSLTRRDFIKANAVAATAAAAGIATPAIAQPAKA. The 57-residue stretch at 36–92 folds into the 4Fe-4S Mo/W bis-MGD-type domain; it reads IRWDKGVCRFCGTGCAVLVGVQDGRVVATQGDPDSPVNRGLNCIKGYFLSKIMYGED. Residues Cys43, Cys46, Cys50, and Cys78 each contribute to the [4Fe-4S] cluster site. Mo-bis(molybdopterin guanine dinucleotide) contacts are provided by residues Lys80, Gln148, Asn173, Cys177, 210–217, 241–245, 260–262, Met371, Gln375, Asn481, 507–508, Lys530, Asp557, and 717–726; these read WGSNMAEM, STFEH, QTD, SD, and TGRVLEHWHS. Phe793 provides a ligand contact to substrate. The Mo-bis(molybdopterin guanine dinucleotide) site is built by Asn801 and Lys818.

This sequence belongs to the prokaryotic molybdopterin-containing oxidoreductase family. NasA/NapA/NarB subfamily. As to quaternary structure, component of the periplasmic nitrate reductase NapAB complex composed of NapA and NapB. Requires [4Fe-4S] cluster as cofactor. Mo-bis(molybdopterin guanine dinucleotide) is required as a cofactor. Post-translationally, predicted to be exported by the Tat system. The position of the signal peptide cleavage has not been experimentally proven.

The protein localises to the periplasm. The enzyme catalyses 2 Fe(II)-[cytochrome] + nitrate + 2 H(+) = 2 Fe(III)-[cytochrome] + nitrite + H2O. In terms of biological role, catalytic subunit of the periplasmic nitrate reductase complex NapAB. Receives electrons from NapB and catalyzes the reduction of nitrate to nitrite. This is Periplasmic nitrate reductase from Paramagnetospirillum magneticum (strain ATCC 700264 / AMB-1) (Magnetospirillum magneticum).